The following is a 171-amino-acid chain: 3-hydroxydecanoyl-[acyl-carrier-protein] dehydratase (171 aa).

H70 is a catalytic residue.

The protein belongs to the thioester dehydratase family. FabA subfamily. Homodimer.

The protein resides in the cytoplasm. The enzyme catalyses a (3R)-hydroxyacyl-[ACP] = a (2E)-enoyl-[ACP] + H2O. It carries out the reaction (3R)-hydroxydecanoyl-[ACP] = (2E)-decenoyl-[ACP] + H2O. It catalyses the reaction (2E)-decenoyl-[ACP] = (3Z)-decenoyl-[ACP]. Its pathway is lipid metabolism; fatty acid biosynthesis. In terms of biological role, necessary for the introduction of cis unsaturation into fatty acids. Catalyzes the dehydration of (3R)-3-hydroxydecanoyl-ACP to E-(2)-decenoyl-ACP and then its isomerization to Z-(3)-decenoyl-ACP. Can catalyze the dehydratase reaction for beta-hydroxyacyl-ACPs with saturated chain lengths up to 16:0, being most active on intermediate chain length. The protein is 3-hydroxydecanoyl-[acyl-carrier-protein] dehydratase of Nitrosococcus oceani (strain ATCC 19707 / BCRC 17464 / JCM 30415 / NCIMB 11848 / C-107).